We begin with the raw amino-acid sequence, 357 residues long: Protein Wnt-8c (357 aa).

The first 16 residues, Met1 to Gly16, serve as a signal peptide directing secretion. Cys55 and Cys66 are disulfide-bonded. N-linked (GlcNAc...) asparagine glycosylation occurs at Asn104. Cystine bridges form between Cys105/Cys113, Cys115/Cys133, Cys181/Cys195, Cys183/Cys190, Cys260/Cys298, Cys276/Cys291, Cys313/Cys328, Cys315/Cys325, and Cys320/Cys321. Residue Ser187 is the site of O-palmitoleoyl serine attachment. 2 N-linked (GlcNAc...) asparagine glycosylation sites follow: Asn263 and Asn282. Residue Asn346 is glycosylated (N-linked (GlcNAc...) asparagine).

Belongs to the Wnt family. Palmitoleoylation is required for efficient binding to frizzled receptors. Depalmitoleoylation leads to Wnt signaling pathway inhibition. Post-translationally, proteolytic processing by tiki1 and tiki2 promotes oxidation and formation of large disulfide-bond oligomers, leading to inactivation of wnt8c. In terms of tissue distribution, cells that form rhombomere 4. Hensen node and the neural plate immediately anterior to it.

It localises to the secreted. It is found in the extracellular space. The protein localises to the extracellular matrix. Functionally, ligand for members of the frizzled family of seven transmembrane receptors. Probable developmental protein. Is likely to signal over only few cell diameters. May be involved in the regulation of axis formation and in the rhombomere specification. The protein is Protein Wnt-8c (WNT8C) of Gallus gallus (Chicken).